Reading from the N-terminus, the 22-residue chain is Myofibril-bound serine protease (22 aa).

Belongs to the peptidase S1 family. In terms of tissue distribution, detected in muscle (at protein level).

The protein resides in the cytoplasm. Inhibited by the serine protease inhibitors, antipain, aprotinin, DFP, leupeptin, STI and TLCK, and by the cysteine proteinase inhibitors DTNB and to a lesser extent E-64. Not inhibited by the metalloproteinase inhibitor EDTA. Functionally, serine protease that selectively cleaves Arg-|-Xaa bonds. This is Myofibril-bound serine protease from Cyprinus carpio (Common carp).